A 55-amino-acid polypeptide reads, in one-letter code: Large ribosomal subunit protein bL33 (55 aa).

It belongs to the bacterial ribosomal protein bL33 family.

This is Large ribosomal subunit protein bL33 from Arthrobacter sp. (strain FB24).